Here is a 500-residue protein sequence, read N- to C-terminus: MADWTEKYRPSTLSEVRGNDKARDAFADWARSWDDHHEAVVLHGSPGVGKTSAAHALANDMGWETVELNASDQRTADVIERFAGRAARNATLGGSAAGGGAAGGDTASRQLVILDEADNIHGNYDRGGASAITELVKESGQPIVLIANDYYDMARGLRNATQEIEFRDVSARSIVPVLRDICRKEGIEFESDALERIAERNRGDLRGAINDLQAATEGRDSIAVEDVVTGDRDKALGLFPYLDAVLKEESAEEALQSAYAVDETPDDLTKWIENNVLDVYDPSEVVRAYDFLANADVWLGRVRATQNYSYWRYATDNAAAGVAAARDGTKGGWTRYGRPQFWSPSDATADEVVGQIAAKSGCSVATARREVLPFLEAVTHHCKPRELTVAMAAAYDLDEAGIAFVTGSGESTNKVASIAEDAQALREERMEDHAEGAFAGGRHAADDLGASDGETTNASGTASSSGDDGDADGTTDGDGSDANDGNDDDDDGQAGLSDFV.

Residue G44–T51 coordinates ATP. The tract at residues H443–V500 is disordered. The span at T455–G466 shows a compositional bias: low complexity. Positions D467 to G492 are enriched in acidic residues.

This sequence belongs to the activator 1 small subunits family. RfcL subfamily. As to quaternary structure, heteromultimer composed of small subunits (RfcS) and large subunits (RfcL).

Its function is as follows. Part of the RFC clamp loader complex which loads the PCNA sliding clamp onto DNA. In Halorubrum lacusprofundi (strain ATCC 49239 / DSM 5036 / JCM 8891 / ACAM 34), this protein is Replication factor C large subunit.